A 247-amino-acid polypeptide reads, in one-letter code: Ribonuclease 3 (247 aa).

The region spanning His-23–Gly-149 is the RNase III domain. Residue Glu-62 coordinates Mg(2+). Asp-66 is a catalytic residue. 2 residues coordinate Mg(2+): Asp-135 and Glu-138. The active site involves Glu-138. One can recognise a DRBM domain in the interval Asp-176–Glu-244.

This sequence belongs to the ribonuclease III family. Homodimer. Requires Mg(2+) as cofactor.

Its subcellular location is the cytoplasm. It carries out the reaction Endonucleolytic cleavage to 5'-phosphomonoester.. In terms of biological role, digests double-stranded RNA. Involved in the processing of primary rRNA transcript to yield the immediate precursors to the large and small rRNAs (23S and 16S). Processes some mRNAs, and tRNAs when they are encoded in the rRNA operon. Processes pre-crRNA and tracrRNA of type II CRISPR loci if present in the organism. This Corynebacterium efficiens (strain DSM 44549 / YS-314 / AJ 12310 / JCM 11189 / NBRC 100395) protein is Ribonuclease 3.